We begin with the raw amino-acid sequence, 339 residues long: MILGIESSCDDSSVALLDIKNLKLLYHKKISQESEHSPFGGVVPELAARLHTRALPALLEEIKPKFKDIKAIAVTNEPGLSVSLIGGVSMAKALSVALNVPLIAVNHLVGHIYSLFLDCEARFPLGVLLVSGGHTMVLDIDAAGKISLLAGTSDDSFGESFDKVAKMMQLGYPGGAAVQNLAWQCKDKRRFKFTIPFLHDKRLEYSFSGLKNQVRLEIEKIKGQNLAGATDRELSNDDMADICYAFENAACEHIMDKLTKIFKERSFKRFGIVGGASANLNLRSRIERLCLENGCELLLAPLEFCSDNAAMIARAGREKYLKGGFVKHNELNINPRVKF.

Residues H107 and H111 each coordinate Fe cation. Residues 129 to 133, D162, G175, and N279 each bind substrate; that span reads LVSGG. A Fe cation-binding site is contributed by D307.

This sequence belongs to the KAE1 / TsaD family. It depends on Fe(2+) as a cofactor.

The protein resides in the cytoplasm. The enzyme catalyses L-threonylcarbamoyladenylate + adenosine(37) in tRNA = N(6)-L-threonylcarbamoyladenosine(37) in tRNA + AMP + H(+). Required for the formation of a threonylcarbamoyl group on adenosine at position 37 (t(6)A37) in tRNAs that read codons beginning with adenine. Is involved in the transfer of the threonylcarbamoyl moiety of threonylcarbamoyl-AMP (TC-AMP) to the N6 group of A37, together with TsaE and TsaB. TsaD likely plays a direct catalytic role in this reaction. The chain is tRNA N6-adenosine threonylcarbamoyltransferase from Campylobacter curvus (strain 525.92).